Here is a 504-residue protein sequence, read N- to C-terminus: Ammonium transporter 1 member 4 (504 aa).

12 helical membrane-spanning segments follow: residues leucine 12–isoleucine 32, leucine 55–glycine 75, valine 90–glycine 110, tyrosine 136–alanine 156, phenylalanine 161–histidine 181, phenylalanine 207–isoleucine 227, leucine 251–phenylalanine 271, alanine 292–glycine 314, isoleucine 318–isoleucine 338, valine 344–cysteine 364, leucine 377–phenylalanine 397, and valine 430–isoleucine 450. Threonine 471 is subject to Phosphothreonine.

It belongs to the ammonia transporter channel (TC 1.A.11.2) family. In terms of tissue distribution, specifically expressed in pollen grains and tubes.

It localises to the cell membrane. In terms of biological role, high affinity ammonium transporter in the plasma membrane. This chain is Ammonium transporter 1 member 4 (AMT1-4), found in Arabidopsis thaliana (Mouse-ear cress).